Consider the following 175-residue polypeptide: Probable DNA replication complex GINS protein PSF2 (175 aa).

The protein belongs to the GINS2/PSF2 family. As to quaternary structure, component of the GINS complex which is a heterotetramer of SLD5, PSF1, PSF2 and PSF3.

The protein resides in the nucleus. In terms of biological role, the GINS complex plays an essential role in the initiation of DNA replication. This chain is Probable DNA replication complex GINS protein PSF2, found in Encephalitozoon cuniculi (strain GB-M1) (Microsporidian parasite).